Here is a 120-residue protein sequence, read N- to C-terminus: Large ribosomal subunit protein bL12 (120 aa).

Belongs to the bacterial ribosomal protein bL12 family. As to quaternary structure, homodimer. Part of the ribosomal stalk of the 50S ribosomal subunit. Forms a multimeric L10(L12)X complex, where L10 forms an elongated spine to which 2 to 4 L12 dimers bind in a sequential fashion. Binds GTP-bound translation factors.

Its function is as follows. Forms part of the ribosomal stalk which helps the ribosome interact with GTP-bound translation factors. Is thus essential for accurate translation. This is Large ribosomal subunit protein bL12 from Lactobacillus helveticus (strain DPC 4571).